Here is a 520-residue protein sequence, read N- to C-terminus: MDFANLAAQLNAGTILPEGIVIVTLMGVLIVDLILGRTSSRWIGYLAIAGLLAAIVALYFQWDATNPISFTGAFIGDDLSIIFRGIIALSAVVTILMSIRYVEQSGTALAEFIAILLTATLGGMFVSGASELVMIFISLETLSISSYLLTGYTKRDPRSNEAALKYLLIGASSTAVFLYGVSLLYGLSGGQTELNAIANGIITANVGQSLGAVIALVFVIAGIGFKISAAPFHQWTPDVYEGAPTPVIAFLSVGSKAAGFALAIRLLTTVFPFVAEEWKFVFTALAVLSMILGNVVALAQTSMKRMLAYSSIAQAGFVMIGLIAGTDAGYASMIFYLLVYLFMNLCGFTCIILFSLRTGTDQIAEYSGLYQKDPLLTLGLSISLLSLGGIPPLAGFFGKIYLFWAGWQAGLYWLVLLGLVTSVISIYYYIRVVKMMVVKEPQEMSDVVKNYPEIRWNLPGFRPLQVGLVLTLIATSVAGILSNPLFTLANNSVANTAILQATKVVSTQVSAIPAEKPDGL.

A run of 14 helical transmembrane segments spans residues 15 to 35 (ILPEGIVIVTLMGVLIVDLIL), 42 to 62 (WIGYLAIAGLLAAIVALYFQW), 79 to 99 (LSIIFRGIIALSAVVTILMSI), 106 to 126 (GTALAEFIAILLTATLGGMFV), 132 to 152 (LVMIFISLETLSISSYLLTGY), 167 to 187 (LLIGASSTAVFLYGVSLLYGL), 210 to 230 (LGAVIALVFVIAGIGFKISAA), 244 to 264 (PTPVIAFLSVGSKAAGFALAI), 280 to 300 (FVFTALAVLSMILGNVVALAQ), 306 to 326 (MLAYSSIAQAGFVMIGLIAGT), 334 to 354 (IFYLLVYLFMNLCGFTCIILF), 378 to 398 (LGLSISLLSLGGIPPLAGFFG), 400 to 420 (IYLFWAGWQAGLYWLVLLGLV), and 466 to 486 (VGLVLTLIATSVAGILSNPLF).

It belongs to the complex I subunit 2 family. NDH-1 can be composed of about 15 different subunits; different subcomplexes with different compositions have been identified which probably have different functions.

Its subcellular location is the cellular thylakoid membrane. The catalysed reaction is a plastoquinone + NADH + (n+1) H(+)(in) = a plastoquinol + NAD(+) + n H(+)(out). It carries out the reaction a plastoquinone + NADPH + (n+1) H(+)(in) = a plastoquinol + NADP(+) + n H(+)(out). NDH-1 shuttles electrons from an unknown electron donor, via FMN and iron-sulfur (Fe-S) centers, to quinones in the respiratory and/or the photosynthetic chain. The immediate electron acceptor for the enzyme in this species is believed to be plastoquinone. Couples the redox reaction to proton translocation, and thus conserves the redox energy in a proton gradient. Cyanobacterial NDH-1 also plays a role in inorganic carbon-concentration. This is NAD(P)H-quinone oxidoreductase subunit 2 from Nostoc sp. (strain PCC 7120 / SAG 25.82 / UTEX 2576).